The chain runs to 1342 residues: MRANDALQVLGLLFSLARGSEVGNSQAVCPGTLNGLSVTGDAENQYQTLYKLYERCEVVMGNLEIVLTGHNADLSFLQWIREVTGYVLVAMNEFSTLPLPNLRVVRGTQVYDGKFAIFVMLNYNTNSSHALRQLRLTQLTEILSGGVYIEKNDKLCHMDTIDWRDIVRDRDAEIVVKDNGRSCPPCHEVCKGRCWGPGSEDCQTLTKTICAPQCNGHCFGPNPNQCCHDECAGGCSGPQDTDCFACRHFNDSGACVPRCPQPLVYNKLTFQLEPNPHTKYQYGGVCVASCPHNFVVDQTSCVRACPPDKMEVDKNGLKMCEPCGGLCPKACEGTGSGSRFQTVDSSNIDGFVNCTKILGNLDFLITGLNGDPWHKIPALDPEKLNVFRTVREITGYLNIQSWPPHMHNFSVFSNLTTIGGRSLYNRGFSLLIMKNLNVTSLGFRSLKEISAGRIYISANRQLCYHHSLNWTKVLRGPTEERLDIKHNRPRRDCVAEGKVCDPLCSSGGCWGPGPGQCLSCRNYSRGGVCVTHCNFLNGEPREFAHEAECFSCHPECQPMEGTATCNGSGSDTCAQCAHFRDGPHCVSSCPHGVLGAKGPIYKYPDVQNECRPCHENCTQGCKGPELQDCLGQTLVLIGKTHLTMALTVIAGLVVIFMMLGGTFLYWRGRRIQNKRAMRRYLERGESIEPLDPSEKANKVLARIFKETELRKLKVLGSGVFGTVHKGVWIPEGESIKIPVCIKVIEDKSGRQSFQAVTDHMLAIGSLDHAHIVRLLGLCPGSSLQLVTQYLPLGSLLDHVRQHRGALGPQLLLNWGVQIAKGMYYLEEHGMVHRNLAARNVLLKSPSQVQVADFGVADLLPPDDKQLLYSEAKTPIKWMALESIHFGKYTHQSDVWSYGVTVWELMTFGAEPYAGLRLAEVPDLLEKGERLAQPQICTIDVYMVMVKCWMIDENIRPTFKELANEFTRMARDPPRYLVIKRESGPGIAPGPEPHGLTNKKLEEVELEPELDLDLDLEAEEDNLATTTLGSALSLPVGTLNRPRGSQSLLSPSSGYMPMNQGNLGESCQESAVSGSSERCPRPVSLHPMPRGCLASESSEGHVTGSEAELQEKVSMCRSRSRSRSPRPRGDSAYHSQRHSLLTPVTPLSPPGLEEEDVNGYVMPDTHLKGTPSSREGTLSSVGLSSVLGTEEEDEDEEYEYMNRRRRHSPPHPPRPSSLEELGYEYMDVGSDLSASLGSTQSCPLHPVPIMPTAGTTPDEDYEYMNRQRDGGGPGGDYAAMGACPASEQGYEEMRAFQGPGHQAPHVHYARLKTLRSLEATDSAFDNPDYWHSRLFPKANAQRT.

The signal sequence occupies residues 1–19; it reads MRANDALQVLGLLFSLARG. The Extracellular portion of the chain corresponds to 20 to 643; the sequence is SEVGNSQAVC…LVLIGKTHLT (624 aa). An intrachain disulfide couples cysteine 29 to cysteine 56. An N-linked (GlcNAc...) asparagine glycan is attached at asparagine 126. 12 disulfides stabilise this stretch: cysteine 156-cysteine 183, cysteine 186-cysteine 194, cysteine 190-cysteine 202, cysteine 210-cysteine 218, cysteine 214-cysteine 226, cysteine 227-cysteine 235, cysteine 231-cysteine 243, cysteine 246-cysteine 255, cysteine 259-cysteine 286, cysteine 290-cysteine 301, cysteine 305-cysteine 320, and cysteine 323-cysteine 327. Asparagine 250 carries an N-linked (GlcNAc...) asparagine glycan. N-linked (GlcNAc...) asparagine glycosylation is found at asparagine 353, asparagine 408, asparagine 414, asparagine 437, and asparagine 469. Cystine bridges form between cysteine 500–cysteine 509, cysteine 504–cysteine 517, cysteine 520–cysteine 529, cysteine 533–cysteine 549, cysteine 552–cysteine 565, cysteine 556–cysteine 573, cysteine 576–cysteine 585, cysteine 589–cysteine 610, cysteine 613–cysteine 621, and cysteine 617–cysteine 629. N-linked (GlcNAc...) asparagine glycosylation occurs at asparagine 522. Residue asparagine 566 is glycosylated (N-linked (GlcNAc...) asparagine). Asparagine 616 carries N-linked (GlcNAc...) asparagine glycosylation. Residues 644–664 traverse the membrane as a helical segment; sequence MALTVIAGLVVIFMMLGGTFL. Topologically, residues 665-1342 are cytoplasmic; that stretch reads YWRGRRIQNK…LFPKANAQRT (678 aa). The residue at position 686 (serine 686) is a Phosphoserine. Residues 709-966 form the Protein kinase domain; that stretch reads LRKLKVLGSG…TFKELANEFT (258 aa). ATP contacts are provided by residues 715–723, lysine 742, 788–790, and 834–839; these read LGSGVFGTV, QYL, and NLAARN. Asparagine 834 serves as the catalytic Proton acceptor. Disordered regions lie at residues 980–999 and 1033–1152; these read RESGPGIAPGPEPHGLTNKK and LPVG…PGLE. At serine 982 the chain carries Phosphoserine. A compositionally biased stretch (polar residues) spans 1042–1075; sequence RGSQSLLSPSSGYMPMNQGNLGESCQESAVSGSS.

The protein belongs to the protein kinase superfamily. Tyr protein kinase family. EGF receptor subfamily. Monomer and homodimer. Heterodimer with each of the other ERBB receptors (Potential). Interacts with CSPG5. Interacts with GRB7. Interacts with MUC1. Interacts with MYOC. Interacts with isoform 2 of PA2G4. Found in a ternary complex with NRG1 and ITGAV:ITGB3 or ITGA6:ITGB4. Autophosphorylated. Ligand-binding increases phosphorylation on tyrosine residues and promotes its association with the p85 subunit of phosphatidylinositol 3-kinase. Epithelial tissues and brain.

It localises to the cell membrane. It is found in the secreted. It carries out the reaction L-tyrosyl-[protein] + ATP = O-phospho-L-tyrosyl-[protein] + ADP + H(+). Its function is as follows. Tyrosine-protein kinase that plays an essential role as cell surface receptor for neuregulins. Binds to neuregulin-1 (NRG1) and is activated by it; ligand-binding increases phosphorylation on tyrosine residues and promotes its association with the p85 subunit of phosphatidylinositol 3-kinase. May also be activated by CSPG5. Involved in the regulation of myeloid cell differentiation. The chain is Receptor tyrosine-protein kinase erbB-3 (ERBB3) from Homo sapiens (Human).